Consider the following 452-residue polypeptide: tRNA modification GTPase MnmE (452 aa).

(6S)-5-formyl-5,6,7,8-tetrahydrofolate is bound by residues Arg24, Glu81, and Arg120. The TrmE-type G domain occupies 216–373; it reads GIKTVIVGAP…LFGAIGRWAD (158 aa). GTP-binding positions include 226–231, 245–251, and 270–273; these read NVGKSS, SAEPGTT, and DTAG. Mg(2+)-binding residues include Ser230 and Thr251. Lys452 contacts (6S)-5-formyl-5,6,7,8-tetrahydrofolate.

This sequence belongs to the TRAFAC class TrmE-Era-EngA-EngB-Septin-like GTPase superfamily. TrmE GTPase family. As to quaternary structure, homodimer. Heterotetramer of two MnmE and two MnmG subunits. Requires K(+) as cofactor.

The protein resides in the cytoplasm. In terms of biological role, exhibits a very high intrinsic GTPase hydrolysis rate. Involved in the addition of a carboxymethylaminomethyl (cmnm) group at the wobble position (U34) of certain tRNAs, forming tRNA-cmnm(5)s(2)U34. The polypeptide is tRNA modification GTPase MnmE (Opitutus terrae (strain DSM 11246 / JCM 15787 / PB90-1)).